The chain runs to 451 residues: Tubulin beta chain (451 aa).

Positions 11, 69, 138, 142, 143, 144, 204, and 226 each coordinate GTP. Glu-69 is a Mg(2+) binding site. The interval 426-451 (QDATAEEEGEFDENEGAEGEEQPADY) is disordered. Over residues 429-451 (TAEEEGEFDENEGAEGEEQPADY) the composition is skewed to acidic residues.

Belongs to the tubulin family. As to quaternary structure, dimer of alpha and beta chains. A typical microtubule is a hollow water-filled tube with an outer diameter of 25 nm and an inner diameter of 15 nM. Alpha-beta heterodimers associate head-to-tail to form protofilaments running lengthwise along the microtubule wall with the beta-tubulin subunit facing the microtubule plus end conferring a structural polarity. Microtubules usually have 13 protofilaments but different protofilament numbers can be found in some organisms and specialized cells. Mg(2+) is required as a cofactor.

The protein localises to the cytoplasm. It localises to the cytoskeleton. Functionally, tubulin is the major constituent of microtubules, a cylinder consisting of laterally associated linear protofilaments composed of alpha- and beta-tubulin heterodimers. Microtubules grow by the addition of GTP-tubulin dimers to the microtubule end, where a stabilizing cap forms. Below the cap, tubulin dimers are in GDP-bound state, owing to GTPase activity of alpha-tubulin. In Naegleria pringsheimi (Amoeba), this protein is Tubulin beta chain.